Consider the following 353-residue polypeptide: Serine proteinase inhibitor 1 (353 aa).

The protein belongs to the serpin family. Poxviruses subfamily.

The protein localises to the host cytoplasm. Plays a role in mediating viral host range. May act to inhibit a caspase independent form of apoptosis to allow efficient virus replication in infected cells. In Vaccinia virus (strain Copenhagen) (VACV), this protein is Serine proteinase inhibitor 1 (OPG208).